A 187-amino-acid polypeptide reads, in one-letter code: UPF0301 protein Shewmr7_1270 (187 aa).

It belongs to the UPF0301 (AlgH) family.

The sequence is that of UPF0301 protein Shewmr7_1270 from Shewanella sp. (strain MR-7).